Consider the following 160-residue polypeptide: Heme transporter hrg-5 (160 aa).

Residues 21–41 (IALTILDILIGFSNILSYAIQ) form a helical membrane-spanning segment. The N-linked (GlcNAc...) asparagine glycan is linked to Asn44. Helical transmembrane passes span 47-67 (ALTLTAMVTLVACHTLQMFLA), 89-109 (ITLGFLALGCFVVCFIIAGVT), and 123-142 (FTGLWATAITKYTWQNALLA). Asn144 is a glycosylation site (N-linked (GlcNAc...) asparagine).

The protein belongs to the HRG family.

It is found in the membrane. Functionally, heme transporter. The chain is Heme transporter hrg-5 (hrg-5) from Caenorhabditis elegans.